Reading from the N-terminus, the 227-residue chain is Cytochrome c oxidase subunit 2 (227 aa).

Residues 1–26 (MATWSNFNLQNSASPLMEQIIFFHDH) lie on the Mitochondrial intermembrane side of the membrane. A helical membrane pass occupies residues 27-51 (TLVILIMITILVGYLMISLFFNSYI). Topologically, residues 52–62 (NRFLLEGQMIE) are mitochondrial matrix. The chain crosses the membrane as a helical span at residues 63–81 (LIWTILPAITLIFIALPSL). Over 82–227 (RLLYLLDELN…NFINWINNYS (146 aa)) the chain is Mitochondrial intermembrane. Cu cation contacts are provided by histidine 161, cysteine 196, glutamate 198, cysteine 200, histidine 204, and methionine 207. Glutamate 198 provides a ligand contact to Mg(2+).

Belongs to the cytochrome c oxidase subunit 2 family. Component of the cytochrome c oxidase (complex IV, CIV), a multisubunit enzyme composed of a catalytic core of 3 subunits and several supernumerary subunits. The complex exists as a monomer or a dimer and forms supercomplexes (SCs) in the inner mitochondrial membrane with ubiquinol-cytochrome c oxidoreductase (cytochrome b-c1 complex, complex III, CIII). Cu cation is required as a cofactor.

The protein localises to the mitochondrion inner membrane. The enzyme catalyses 4 Fe(II)-[cytochrome c] + O2 + 8 H(+)(in) = 4 Fe(III)-[cytochrome c] + 2 H2O + 4 H(+)(out). Functionally, component of the cytochrome c oxidase, the last enzyme in the mitochondrial electron transport chain which drives oxidative phosphorylation. The respiratory chain contains 3 multisubunit complexes succinate dehydrogenase (complex II, CII), ubiquinol-cytochrome c oxidoreductase (cytochrome b-c1 complex, complex III, CIII) and cytochrome c oxidase (complex IV, CIV), that cooperate to transfer electrons derived from NADH and succinate to molecular oxygen, creating an electrochemical gradient over the inner membrane that drives transmembrane transport and the ATP synthase. Cytochrome c oxidase is the component of the respiratory chain that catalyzes the reduction of oxygen to water. Electrons originating from reduced cytochrome c in the intermembrane space (IMS) are transferred via the dinuclear copper A center (CU(A)) of subunit 2 and heme A of subunit 1 to the active site in subunit 1, a binuclear center (BNC) formed by heme A3 and copper B (CU(B)). The BNC reduces molecular oxygen to 2 water molecules using 4 electrons from cytochrome c in the IMS and 4 protons from the mitochondrial matrix. The sequence is that of Cytochrome c oxidase subunit 2 (COII) from Choristoneura fumiferana (Spruce budworm moth).